Consider the following 492-residue polypeptide: Glycerol kinase (492 aa).

Thr11 serves as a coordination point for ADP. Thr11 and Thr12 together coordinate ATP. Residue Thr11 participates in sn-glycerol 3-phosphate binding. Lys15 lines the ADP pocket. Sn-glycerol 3-phosphate is bound by residues Arg79, Glu80, Tyr129, and Asp238. The glycerol site is built by Arg79, Glu80, Tyr129, Asp238, and Gln239. Thr260, Gly302, Gly403, and Asn407 together coordinate ADP. 3 residues coordinate ATP: Thr260, Gly302, and Gly403.

This sequence belongs to the FGGY kinase family.

The catalysed reaction is glycerol + ATP = sn-glycerol 3-phosphate + ADP + H(+). It participates in polyol metabolism; glycerol degradation via glycerol kinase pathway; sn-glycerol 3-phosphate from glycerol: step 1/1. Its activity is regulated as follows. Inhibited by fructose 1,6-bisphosphate (FBP). In terms of biological role, key enzyme in the regulation of glycerol uptake and metabolism. Catalyzes the phosphorylation of glycerol to yield sn-glycerol 3-phosphate. The sequence is that of Glycerol kinase from Aquifex aeolicus (strain VF5).